Reading from the N-terminus, the 119-residue chain is Large ribosomal subunit protein bL20 (119 aa).

It belongs to the bacterial ribosomal protein bL20 family.

In terms of biological role, binds directly to 23S ribosomal RNA and is necessary for the in vitro assembly process of the 50S ribosomal subunit. It is not involved in the protein synthesizing functions of that subunit. This chain is Large ribosomal subunit protein bL20, found in Chloroflexus aurantiacus (strain ATCC 29366 / DSM 635 / J-10-fl).